The following is a 201-amino-acid chain: Large ribosomal subunit protein uL4 (201 aa).

The interval 45–67 (AQKTRAEVTGSGKKPWRQKGTGR) is disordered.

Belongs to the universal ribosomal protein uL4 family. As to quaternary structure, part of the 50S ribosomal subunit.

Its function is as follows. One of the primary rRNA binding proteins, this protein initially binds near the 5'-end of the 23S rRNA. It is important during the early stages of 50S assembly. It makes multiple contacts with different domains of the 23S rRNA in the assembled 50S subunit and ribosome. In terms of biological role, forms part of the polypeptide exit tunnel. The protein is Large ribosomal subunit protein uL4 of Yersinia enterocolitica serotype O:8 / biotype 1B (strain NCTC 13174 / 8081).